We begin with the raw amino-acid sequence, 562 residues long: NAD-dependent malic enzyme (562 aa).

Tyr-101 functions as the Proton donor in the catalytic mechanism. Position 154 (Arg-154) interacts with NAD(+). Lys-172 acts as the Proton acceptor in catalysis. 3 residues coordinate a divalent metal cation: Glu-243, Asp-244, and Asp-267. Residues Asp-267 and Asn-415 each coordinate NAD(+).

It belongs to the malic enzymes family. Homotetramer. Mg(2+) serves as cofactor. The cofactor is Mn(2+).

It catalyses the reaction (S)-malate + NAD(+) = pyruvate + CO2 + NADH. The enzyme catalyses oxaloacetate + H(+) = pyruvate + CO2. This Shewanella frigidimarina (strain NCIMB 400) protein is NAD-dependent malic enzyme.